A 262-amino-acid chain; its full sequence is Cytochrome c oxidase subunit 3 (262 aa).

6 helical membrane passes run 39 to 59 (YDIS…YQWW), 83 to 103 (GMIL…WAFF), 120 to 140 (MGII…ILLA), 163 to 183 (GLFF…YEYI), 201 to 221 (ATGF…VCLL), and 240 to 260 (AWYW…IYWW).

Belongs to the cytochrome c oxidase subunit 3 family. Component of the cytochrome c oxidase (complex IV, CIV), a multisubunit enzyme composed of a catalytic core of 3 subunits and several supernumerary subunits. The complex exists as a monomer or a dimer and forms supercomplexes (SCs) in the inner mitochondrial membrane with ubiquinol-cytochrome c oxidoreductase (cytochrome b-c1 complex, complex III, CIII).

The protein resides in the mitochondrion inner membrane. The enzyme catalyses 4 Fe(II)-[cytochrome c] + O2 + 8 H(+)(in) = 4 Fe(III)-[cytochrome c] + 2 H2O + 4 H(+)(out). In terms of biological role, component of the cytochrome c oxidase, the last enzyme in the mitochondrial electron transport chain which drives oxidative phosphorylation. The respiratory chain contains 3 multisubunit complexes succinate dehydrogenase (complex II, CII), ubiquinol-cytochrome c oxidoreductase (cytochrome b-c1 complex, complex III, CIII) and cytochrome c oxidase (complex IV, CIV), that cooperate to transfer electrons derived from NADH and succinate to molecular oxygen, creating an electrochemical gradient over the inner membrane that drives transmembrane transport and the ATP synthase. Cytochrome c oxidase is the component of the respiratory chain that catalyzes the reduction of oxygen to water. Electrons originating from reduced cytochrome c in the intermembrane space (IMS) are transferred via the dinuclear copper A center (CU(A)) of subunit 2 and heme A of subunit 1 to the active site in subunit 1, a binuclear center (BNC) formed by heme A3 and copper B (CU(B)). The BNC reduces molecular oxygen to 2 water molecules using 4 electrons from cytochrome c in the IMS and 4 protons from the mitochondrial matrix. In Drosophila yakuba (Fruit fly), this protein is Cytochrome c oxidase subunit 3 (mt:CoIII).